Consider the following 203-residue polypeptide: Chaperonin-like RbcX protein 2, chloroplastic (203 aa).

A chloroplast-targeting transit peptide spans 1-78 (MVSAWFVVGS…RKSKKLLIVN (78 aa)).

This sequence belongs to the RbcX family. As to quaternary structure, homodimer. Interacts with rbcL, atpB and RBCS-1B.

The protein localises to the plastid. The protein resides in the chloroplast stroma. In terms of biological role, chaperone involved in RuBisCO assembly process. The polypeptide is Chaperonin-like RbcX protein 2, chloroplastic (Arabidopsis thaliana (Mouse-ear cress)).